The following is a 360-amino-acid chain: Glutamate--cysteine ligase (360 aa).

It belongs to the glutamate--cysteine ligase type 2 family. YbdK subfamily.

It catalyses the reaction L-cysteine + L-glutamate + ATP = gamma-L-glutamyl-L-cysteine + ADP + phosphate + H(+). Its function is as follows. Catalyzes the synthesis of gamma-glutamylcysteine (gamma-GC), the main low-molecular-weight thiol compound instead of glutathione in halophilic archaea. The polypeptide is Glutamate--cysteine ligase (Halobacterium salinarum (strain ATCC 29341 / DSM 671 / R1)).